A 660-amino-acid chain; its full sequence is UvrABC system protein B (660 aa).

The region spanning 26–413 (AGINEGKKHQ…TPEMVEQIIR (388 aa)) is the Helicase ATP-binding domain. Residue 39 to 46 (GATGTGKT) coordinates ATP. The Beta-hairpin motif lies at 92–115 (YYDYYQPEAYVPQSDTYIEKDASI). The Helicase C-terminal domain maps to 430 to 592 (QIDDLIGEIN…ITPKTIEKRI (163 aa)). The UVR domain occupies 624–659 (EAVIERMEAEMKEAAKTLNFERAAELRDLILELKAE).

The protein belongs to the UvrB family. As to quaternary structure, forms a heterotetramer with UvrA during the search for lesions. Interacts with UvrC in an incision complex.

It localises to the cytoplasm. Its function is as follows. The UvrABC repair system catalyzes the recognition and processing of DNA lesions. A damage recognition complex composed of 2 UvrA and 2 UvrB subunits scans DNA for abnormalities. Upon binding of the UvrA(2)B(2) complex to a putative damaged site, the DNA wraps around one UvrB monomer. DNA wrap is dependent on ATP binding by UvrB and probably causes local melting of the DNA helix, facilitating insertion of UvrB beta-hairpin between the DNA strands. Then UvrB probes one DNA strand for the presence of a lesion. If a lesion is found the UvrA subunits dissociate and the UvrB-DNA preincision complex is formed. This complex is subsequently bound by UvrC and the second UvrB is released. If no lesion is found, the DNA wraps around the other UvrB subunit that will check the other stand for damage. The polypeptide is UvrABC system protein B (Halalkalibacterium halodurans (strain ATCC BAA-125 / DSM 18197 / FERM 7344 / JCM 9153 / C-125) (Bacillus halodurans)).